A 308-amino-acid chain; its full sequence is Tryptophan 2,3-dioxygenase (308 aa).

The interval 1–35 is disordered; sequence MQPPGDNAPAGCPFSGAHAAQPAHEAPHVPGDAAG. Positions 17–30 are enriched in low complexity; that stretch reads AHAAQPAHEAPHVP. Substrate contacts are provided by residues 77 to 81, tyrosine 139, and arginine 143; that span reads FIIQH. Histidine 266 contacts heme. Threonine 280 is a binding site for substrate.

This sequence belongs to the tryptophan 2,3-dioxygenase family. As to quaternary structure, homotetramer. Requires heme as cofactor.

The enzyme catalyses L-tryptophan + O2 = N-formyl-L-kynurenine. The protein operates within amino-acid degradation; L-tryptophan degradation via kynurenine pathway; L-kynurenine from L-tryptophan: step 1/2. Functionally, heme-dependent dioxygenase that catalyzes the oxidative cleavage of the L-tryptophan (L-Trp) pyrrole ring and converts L-tryptophan to N-formyl-L-kynurenine. Catalyzes the oxidative cleavage of the indole moiety. The protein is Tryptophan 2,3-dioxygenase of Burkholderia ambifaria (strain ATCC BAA-244 / DSM 16087 / CCUG 44356 / LMG 19182 / AMMD) (Burkholderia cepacia (strain AMMD)).